The primary structure comprises 112 residues: Large ribosomal subunit protein uL22 (112 aa).

Belongs to the universal ribosomal protein uL22 family. Part of the 50S ribosomal subunit.

Its function is as follows. This protein binds specifically to 23S rRNA; its binding is stimulated by other ribosomal proteins, e.g. L4, L17, and L20. It is important during the early stages of 50S assembly. It makes multiple contacts with different domains of the 23S rRNA in the assembled 50S subunit and ribosome. In terms of biological role, the globular domain of the protein is located near the polypeptide exit tunnel on the outside of the subunit, while an extended beta-hairpin is found that lines the wall of the exit tunnel in the center of the 70S ribosome. In Finegoldia magna (strain ATCC 29328 / DSM 20472 / WAL 2508) (Peptostreptococcus magnus), this protein is Large ribosomal subunit protein uL22.